A 211-amino-acid polypeptide reads, in one-letter code: Redox-sensing transcriptional repressor Rex (211 aa).

The H-T-H motif DNA-binding region spans 18–57; that stretch reads LYYRFLKNLHASGKQRVSSAELSEAVKVDSATIRRDFSYF. NAD(+) is bound at residue 92–97; that stretch reads GVGNLG.

This sequence belongs to the transcriptional regulatory Rex family. In terms of assembly, homodimer.

It is found in the cytoplasm. Its function is as follows. Modulates transcription in response to changes in cellular NADH/NAD(+) redox state. In Anoxybacillus flavithermus (strain DSM 21510 / WK1), this protein is Redox-sensing transcriptional repressor Rex.